Here is a 91-residue protein sequence, read N- to C-terminus: Acylphosphatase (91 aa).

Residues 6–91 (CMRCYISGRV…WEDYITFDVL (86 aa)) form the Acylphosphatase-like domain. Residues Arg21 and Asn39 contribute to the active site.

This sequence belongs to the acylphosphatase family.

It carries out the reaction an acyl phosphate + H2O = a carboxylate + phosphate + H(+). The sequence is that of Acylphosphatase (acyP) from Legionella pneumophila (strain Lens).